The following is an 83-amino-acid chain: EMBRYO SURROUNDING FACTOR 1.1 (83 aa).

The N-terminal stretch at 1–22 is a signal peptide; the sequence is MKSSHTSLICILMLSLVALHQC. Disulfide bonds link Cys41/Cys56, Cys46/Cys75, Cys54/Cys71, and Cys57/Cys64.

It belongs to the MEG family. As to expression, expressed exclusively in ovule embryo sacs and in early developing endosperms.

In terms of biological role, maternally-contributed central cell peptide regulating suspensor development and correct auxin distribution in early developing embryos. In Arabidopsis thaliana (Mouse-ear cress), this protein is EMBRYO SURROUNDING FACTOR 1.1 (ESF1.1).